We begin with the raw amino-acid sequence, 286 residues long: Probable aquaporin PIP2-5 (286 aa).

Position 1 is an N-acetylmethionine (Met-1). Residues 1–18 (MTKEVVGDKRSFSGKDYQ) show a composition bias toward basic and acidic residues. Residues 1-23 (MTKEVVGDKRSFSGKDYQDPPPE) are disordered. The Cytoplasmic segment spans residues 1–38 (MTKEVVGDKRSFSGKDYQDPPPEPLFDATELGKWSFYR). Lys-3 carries the post-translational modification N6,N6-dimethyllysine. Residues 39-59 (ALIAEFIATLLFLYVTIMTVI) form a helical membrane-spanning segment. Residues 60–75 (GYKSQTDPALNPDQCT) lie on the Extracellular side of the membrane. The chain crosses the membrane as a helical span at residues 76–96 (GVGVLGIAWAFGGMIFILVYC). At 97-124 (TAGISGGHINPAVTFGLLLARKVTLVRA) the chain is on the cytoplasmic side. The NPA 1 signature appears at 106 to 108 (NPA). Residues 125–145 (VMYMVAQCLGAICGVALVKAF) traverse the membrane as a helical segment. The Extracellular segment spans residues 146–165 (QSAYFTRYGGGANGLSDGYS). A helical membrane pass occupies residues 166–186 (IGTGVAAEIIGTFVLVYTVFS). The Cytoplasmic portion of the chain corresponds to 187 to 200 (ATDPKRSARDSHVP). A helical membrane pass occupies residues 201 to 221 (VLAPLPIGFAVFIVHLATIPI). The Extracellular segment spans residues 222 to 248 (TGTGINPARSLGAAIIYNKDKAWDHHW). An NPA 2 motif is present at residues 227–229 (NPA). The helical transmembrane segment at 249–269 (IFWVGPFAGAAIAAFYHQFVL) threads the bilayer. Residues 270-286 (RAGAIKALGSFRSQPHV) are Cytoplasmic-facing. Residues Ser-279 and Ser-282 each carry the phosphoserine modification.

The protein belongs to the MIP/aquaporin (TC 1.A.8) family. PIP (TC 1.A.8.11) subfamily. Expressed in green siliques.

The protein resides in the cell membrane. Its function is as follows. Aquaporins facilitate the transport of water and small neutral solutes across cell membranes. In Arabidopsis thaliana (Mouse-ear cress), this protein is Probable aquaporin PIP2-5 (PIP2-5).